Reading from the N-terminus, the 268-residue chain is Ubiquinone biosynthesis protein COQ4 homolog 1, mitochondrial (268 aa).

Basic residues predominate over residues 1-10 (MFLRRVHPVR). The transit peptide at 1-18 (MFLRRVHPVRLGHASQRS) directs the protein to the mitochondrion. The segment at 1–44 (MFLRRVHPVRLGHASQRSLTTTKSRNESTTTTVEAPQAAPSPPP) is disordered. A compositionally biased stretch (low complexity) spans 20-38 (TTTKSRNESTTTTVEAPQA). Zn(2+) is bound by residues His-177, Asp-178, His-181, and Glu-193.

Belongs to the COQ4 family. As to quaternary structure, component of a multi-subunit COQ enzyme complex. It depends on Zn(2+) as a cofactor.

It is found in the mitochondrion inner membrane. It catalyses the reaction a 4-hydroxy-3-methoxy-5-(all-trans-polyprenyl)benzoate + H(+) = a 2-methoxy-6-(all-trans-polyprenyl)phenol + CO2. It functions in the pathway cofactor biosynthesis; ubiquinone biosynthesis. Its function is as follows. Lyase that catalyzes the C1-decarboxylation of 4-hydroxy-3-methoxy-5-(all-trans-polyprenyl)benzoic acid into 2-methoxy-6-(all-trans-polyprenyl)phenol during ubiquinone biosynthesis. The polypeptide is Ubiquinone biosynthesis protein COQ4 homolog 1, mitochondrial (Culex quinquefasciatus (Southern house mosquito)).